Here is a 293-residue protein sequence, read N- to C-terminus: L-ornithine N(alpha)-acyltransferase (293 aa).

The protein belongs to the acetyltransferase family. OlsB subfamily.

It catalyses the reaction a (3R)-hydroxyacyl-[ACP] + L-ornithine = a lyso-ornithine lipid + holo-[ACP] + H(+). It participates in lipid metabolism. Functionally, catalyzes the first step in the biosynthesis of ornithine lipids, which are phosphorus-free membrane lipids. Catalyzes the 3-hydroxyacyl-acyl carrier protein-dependent acylation of ornithine to form lyso-ornithine lipid (LOL). The chain is L-ornithine N(alpha)-acyltransferase from Agrobacterium fabrum (strain C58 / ATCC 33970) (Agrobacterium tumefaciens (strain C58)).